The primary structure comprises 246 residues: 1-(5-phosphoribosyl)-5-[(5-phosphoribosylamino)methylideneamino] imidazole-4-carboxamide isomerase (246 aa).

Asp-10 serves as the catalytic Proton acceptor.

The protein belongs to the HisA/HisF family.

The protein localises to the cytoplasm. It carries out the reaction 1-(5-phospho-beta-D-ribosyl)-5-[(5-phospho-beta-D-ribosylamino)methylideneamino]imidazole-4-carboxamide = 5-[(5-phospho-1-deoxy-D-ribulos-1-ylimino)methylamino]-1-(5-phospho-beta-D-ribosyl)imidazole-4-carboxamide. Its pathway is amino-acid biosynthesis; L-histidine biosynthesis; L-histidine from 5-phospho-alpha-D-ribose 1-diphosphate: step 4/9. The chain is 1-(5-phosphoribosyl)-5-[(5-phosphoribosylamino)methylideneamino] imidazole-4-carboxamide isomerase from Corynebacterium efficiens (strain DSM 44549 / YS-314 / AJ 12310 / JCM 11189 / NBRC 100395).